A 263-amino-acid chain; its full sequence is Glucosamine-6-phosphate deaminase (263 aa).

Asp72 serves as the catalytic Proton acceptor; for enolization step. The For ring-opening step role is filled by Asp141. His143 (proton acceptor; for ring-opening step) is an active-site residue. Glu148 serves as the catalytic For ring-opening step.

The protein belongs to the glucosamine/galactosamine-6-phosphate isomerase family. NagB subfamily.

It catalyses the reaction alpha-D-glucosamine 6-phosphate + H2O = beta-D-fructose 6-phosphate + NH4(+). It participates in amino-sugar metabolism; N-acetylneuraminate degradation; D-fructose 6-phosphate from N-acetylneuraminate: step 5/5. Its activity is regulated as follows. Allosterically activated by N-acetylglucosamine 6-phosphate (GlcNAc6P). Catalyzes the reversible isomerization-deamination of glucosamine 6-phosphate (GlcN6P) to form fructose 6-phosphate (Fru6P) and ammonium ion. This Phocaeicola vulgatus (strain ATCC 8482 / DSM 1447 / JCM 5826 / CCUG 4940 / NBRC 14291 / NCTC 11154) (Bacteroides vulgatus) protein is Glucosamine-6-phosphate deaminase.